The primary structure comprises 396 residues: Deoxyguanosinetriphosphate triphosphohydrolase-like protein (396 aa).

The HD domain occupies R62–N198.

Belongs to the dGTPase family. Type 2 subfamily.

The chain is Deoxyguanosinetriphosphate triphosphohydrolase-like protein from Jannaschia sp. (strain CCS1).